A 420-amino-acid polypeptide reads, in one-letter code: Glutamate-1-semialdehyde 2,1-aminomutase (420 aa).

Position 259 is an N6-(pyridoxal phosphate)lysine (Lys259).

This sequence belongs to the class-III pyridoxal-phosphate-dependent aminotransferase family. HemL subfamily. Pyridoxal 5'-phosphate is required as a cofactor.

The protein resides in the cytoplasm. It catalyses the reaction (S)-4-amino-5-oxopentanoate = 5-aminolevulinate. Its pathway is porphyrin-containing compound metabolism; protoporphyrin-IX biosynthesis; 5-aminolevulinate from L-glutamyl-tRNA(Glu): step 2/2. The polypeptide is Glutamate-1-semialdehyde 2,1-aminomutase (hemL) (Methanothermobacter thermautotrophicus (strain ATCC 29096 / DSM 1053 / JCM 10044 / NBRC 100330 / Delta H) (Methanobacterium thermoautotrophicum)).